Here is a 199-residue protein sequence, read N- to C-terminus: Protein GrpE (199 aa).

Positions 1-27 (MSEQNTNHESPEQNVAHDNIEHSDSIL) are disordered. The segment covering 18–27 (DNIEHSDSIL) has biased composition (basic and acidic residues).

This sequence belongs to the GrpE family. In terms of assembly, homodimer.

Its subcellular location is the cytoplasm. Functionally, participates actively in the response to hyperosmotic and heat shock by preventing the aggregation of stress-denatured proteins, in association with DnaK and GrpE. It is the nucleotide exchange factor for DnaK and may function as a thermosensor. Unfolded proteins bind initially to DnaJ; upon interaction with the DnaJ-bound protein, DnaK hydrolyzes its bound ATP, resulting in the formation of a stable complex. GrpE releases ADP from DnaK; ATP binding to DnaK triggers the release of the substrate protein, thus completing the reaction cycle. Several rounds of ATP-dependent interactions between DnaJ, DnaK and GrpE are required for fully efficient folding. The sequence is that of Protein GrpE from Psychrobacter sp. (strain St1).